A 431-amino-acid polypeptide reads, in one-letter code: Histidinol dehydrogenase (431 aa).

NAD(+) is bound by residues Tyr127, Gln189, and Asn212. The substrate site is built by Ser237, Gln259, and His262. Gln259 and His262 together coordinate Zn(2+). Catalysis depends on proton acceptor residues Glu326 and His327. Substrate is bound by residues His327, Asp360, Glu414, and His419. Position 360 (Asp360) interacts with Zn(2+). His419 provides a ligand contact to Zn(2+).

This sequence belongs to the histidinol dehydrogenase family. Zn(2+) serves as cofactor.

It carries out the reaction L-histidinol + 2 NAD(+) + H2O = L-histidine + 2 NADH + 3 H(+). It participates in amino-acid biosynthesis; L-histidine biosynthesis; L-histidine from 5-phospho-alpha-D-ribose 1-diphosphate: step 9/9. Its function is as follows. Catalyzes the sequential NAD-dependent oxidations of L-histidinol to L-histidinaldehyde and then to L-histidine. This Xanthomonas campestris pv. campestris (strain 8004) protein is Histidinol dehydrogenase.